The sequence spans 380 residues: Ceramide synthase 2 (380 aa).

Residues 1 to 40 (MLQTLYDYFWWERLWLPVNLTWADLEDKDGRVYAKASDLY) lie on the Lumenal side of the membrane. The N-linked (GlcNAc...) asparagine glycan is linked to Asn-19. The helical transmembrane segment at 41 to 61 (ITLPLALLFLVIRYFFELYVA) threads the bilayer. The segment at 67–128 (LLNVKEKTRL…RRRRNQDRPS (62 aa)) is homeobox-like. Residues 131–332 (KKFREASWRF…ILRMAHKFIT (202 aa)) form the TLC domain. The next 4 helical transmembrane spans lie at 140-160 (FTYY…KPWF), 175-195 (IIPS…SLLF), 209-229 (QIIH…ANYV), and 264-284 (LFIV…PFWI). Residues 291 to 300 (YPLELYPAFF) carry the Last loop motif motif. A helical transmembrane segment spans residues 304 to 324 (FFNFMMAVLQMLHIFWAYFIL). Over 325-380 (RMAHKFITGKLIEDERSDREETESSEGEETAAGAGAKSRLLANGHPILNNNHPKND) the chain is Cytoplasmic. A disordered region spans residues 340-380 (RSDREETESSEGEETAAGAGAKSRLLANGHPILNNNHPKND). Phosphoserine is present on Ser-341. A compositionally biased stretch (acidic residues) spans 344–353 (EETESSEGEE). Thr-346 is subject to Phosphothreonine. Ser-348 and Ser-349 each carry phosphoserine.

In terms of assembly, interacts with ATP6V0C, ASGR1, ASGR2 and SLC22A1/OCT1. Interacts with ELOV1, HSD17B12 and TECR. Interacts with NDUFS2. Interacts with PAQR4; the interaction regulates the stability and activity of CERS2 and is inhibited in presence of ceramides. Post-translationally, acetylated. Deacetylation by SIRT3 increases enzyme activity and promotes mitochondrial ceramide accumulation. In terms of processing, phosphorylated at the C-terminus by CK2, leading to increase the ceramide synthase activity. Broadly expressed, with highest levels in liver and kidney. In brain is detected in neurons, oligodentrocytes, ependymal cells and epithelial cells of the choroid plexus. In kidney is detected in collecting ducts and to a lesser degree in proximal tubules.

It localises to the endoplasmic reticulum membrane. The catalysed reaction is a very long-chain fatty acyl-CoA + a sphingoid base = an N-(very-long-chain fatty acyl)-sphingoid base + CoA + H(+). It catalyses the reaction docosanoyl-CoA + sphinganine = N-docosanoylsphinganine + CoA + H(+). The enzyme catalyses tetracosanoyl-CoA + sphinganine = N-tetracosanoylsphinganine + CoA + H(+). It carries out the reaction hexacosanoyl-CoA + sphinganine = N-hexacosanoylsphinganine + CoA + H(+). The catalysed reaction is (15Z)-tetracosenoyl-CoA + sphinganine = N-(15Z-tetracosenoyl)-sphinganine + CoA + H(+). It catalyses the reaction 2-hydroxytetracosanoyl-CoA + sphinganine = N-(2-hydroxytetracosanoyl)-sphinganine + CoA + H(+). The enzyme catalyses 2-hydroxydocosanoyl-CoA + sphinganine = N-(2-hydroxydocosanoyl)-sphinganine + CoA + H(+). It carries out the reaction 2-hydroxytetracosenoyl-CoA + sphinganine = N-(2-hydroxytetracosenoyl)-sphinganine + CoA + H(+). The catalysed reaction is tetracosenoyl-CoA + sphinganine = an N-tetracosenoylsphinganine + CoA + H(+). It catalyses the reaction hexacosenoyl-CoA + sphinganine = N-hexacosenoylsphinganine + CoA + H(+). The enzyme catalyses tetracosanoyl-CoA + sphing-4-enine = N-tetracosanoyl-sphing-4-enine + CoA + H(+). It carries out the reaction tetracosenoyl-CoA + sphing-4-enine = N-(tetracosenoyl)-sphing-4-enine + CoA + H(+). The catalysed reaction is heptadecasphing-4-enine + tetracosanoyl-CoA = N-tetracosanoyl-heptadecasphing-4-enine + CoA + H(+). It catalyses the reaction a fatty acyl-CoA + sphing-4-enine = an N-acylsphing-4-enine + CoA + H(+). The enzyme catalyses sphing-4-enine + hexadecanoyl-CoA = N-hexadecanoylsphing-4-enine + CoA + H(+). It carries out the reaction sphing-4-enine + octadecanoyl-CoA = N-octadecanoylsphing-4-enine + CoA + H(+). The catalysed reaction is eicosanoyl-CoA + sphing-4-enine = N-eicosanoyl-sphing-4-enine + CoA + H(+). It catalyses the reaction sphinganine + hexadecanoyl-CoA = N-hexadecanoylsphinganine + CoA + H(+). The enzyme catalyses sphinganine + octadecanoyl-CoA = N-(octadecanoyl)-sphinganine + CoA + H(+). It carries out the reaction sphinganine + (9Z)-octadecenoyl-CoA = N-(9Z-octadecenoyl)-sphinganine + CoA + H(+). The catalysed reaction is eicosanoyl-CoA + sphinganine = N-eicosanoylsphinganine + CoA + H(+). It participates in lipid metabolism; sphingolipid metabolism. Its activity is regulated as follows. Ceramide synthase activity is inhibited by sphingosine-1-phosphate. In terms of biological role, ceramide synthase that catalyzes the transfer of the acyl chain from acyl-CoA to a sphingoid base, with high selectivity toward very-long-chain fatty acyl-CoA (chain length C22-C27). N-acylates sphinganine and sphingosine bases to form dihydroceramides and ceramides in de novo synthesis and salvage pathways, respectively. Plays a non-redundant role in the synthesis of ceramides with very-long-chain fatty acids in kidney, liver and brain. Regulates the abundance of myelin-specific sphingolipids galactosylceramide and sulfatide that affects myelin sheath architecture and motor neuron functions. This is Ceramide synthase 2 from Mus musculus (Mouse).